The chain runs to 215 residues: Cytochrome b6 (215 aa).

A helical membrane pass occupies residues 32–52; it reads IFHCLGGITLTCFLVQVATGF. Cys-35 contributes to the heme c binding site. The heme b site is built by His-86 and His-100. Transmembrane regions (helical) follow at residues 90–110, 116–136, and 186–206; these read ASMMVLMMILHVFRVYLTGGF, LTWVTGVVLAVLTASFGVTGY, and LHTFVLPLLTAVFMLMHFPMI. Positions 187 and 202 each coordinate heme b.

It belongs to the cytochrome b family. PetB subfamily. In terms of assembly, the 4 large subunits of the cytochrome b6-f complex are cytochrome b6, subunit IV (17 kDa polypeptide, PetD), cytochrome f and the Rieske protein, while the 4 small subunits are PetG, PetL, PetM and PetN. The complex functions as a dimer. It depends on heme b as a cofactor. Heme c serves as cofactor.

The protein resides in the plastid. It localises to the chloroplast thylakoid membrane. Functionally, component of the cytochrome b6-f complex, which mediates electron transfer between photosystem II (PSII) and photosystem I (PSI), cyclic electron flow around PSI, and state transitions. This Amborella trichopoda protein is Cytochrome b6.